The following is a 266-amino-acid chain: Putative carbamate hydrolase RutD (266 aa).

An AB hydrolase-1 domain is found at 14-238 (PVVVLSAGLG…RVEMPWGGHA (225 aa)).

This sequence belongs to the AB hydrolase superfamily. Hydrolase RutD family.

The catalysed reaction is carbamate + 2 H(+) = NH4(+) + CO2. Functionally, involved in pyrimidine catabolism. May facilitate the hydrolysis of carbamate, a reaction that can also occur spontaneously. This is Putative carbamate hydrolase RutD from Klebsiella pneumoniae (strain 342).